The primary structure comprises 195 residues: UPF0314 protein RHE_CH03951 (195 aa).

4 consecutive transmembrane segments (helical) span residues 14 to 34, 64 to 84, 128 to 148, and 150 to 170; these read AFWFVACLAVLVAQIIAEYLM, WYTPSHIIHGFLFYGLGYLIL, DSILNSAMDTVFMCLGFFFAA, and APVALTVVIAIFFEIFTGYVI.

It belongs to the UPF0314 family.

The protein localises to the cell membrane. This chain is UPF0314 protein RHE_CH03951, found in Rhizobium etli (strain ATCC 51251 / DSM 11541 / JCM 21823 / NBRC 15573 / CFN 42).